Here is a 105-residue protein sequence, read N- to C-terminus: Nucleoid-associated protein RPE_4812 (105 aa).

Belongs to the YbaB/EbfC family. In terms of assembly, homodimer.

The protein localises to the cytoplasm. It localises to the nucleoid. Functionally, binds to DNA and alters its conformation. May be involved in regulation of gene expression, nucleoid organization and DNA protection. The polypeptide is Nucleoid-associated protein RPE_4812 (Rhodopseudomonas palustris (strain BisA53)).